The primary structure comprises 391 residues: Transcription factor TCP3 (391 aa).

The disordered stretch occupies residues 1-34 (MAPDNDHFLDSPSPPLLEMRHHQSATENGGGCGE). The TCP domain maps to 49–107 (RKDRHSKVCTAKGPRDRRVRLSAPTAIQFYDVQDRLGFDRPSKAVDWLITKAKSAIDDL). Disordered stretches follow at residues 122–168 (HAAA…PASM), 317–345 (HHHH…PGIH), and 363–391 (FRIP…DSRH). Positions 381–391 (KPSSASSDSRH) are enriched in polar residues.

In terms of assembly, interacts with SPL. Interacts with KIN10; KIN11 and FLZ3. As to expression, expressed in cotyledons, particularly in the vascular region, in leaves, roots, buds, flowers and immature siliques.

The protein localises to the nucleus. Its function is as follows. Plays a pivotal role in the control of morphogenesis of shoot organs by negatively regulating the expression of boundary-specific genes such as CUC genes, probably through the induction of miRNA (e.g. miR164). Participates in ovule development. In Arabidopsis thaliana (Mouse-ear cress), this protein is Transcription factor TCP3 (TCP3).